The following is a 262-amino-acid chain: Flap endonuclease Xni (262 aa).

Asp-105 contacts Mg(2+). The 5'-3' exonuclease domain occupies 164–251; that stretch reads SQFLDLMALA…NINLKDFRAN (88 aa). K(+)-binding residues include Leu-172, Ala-173, Pro-181, Ile-183, and Ile-186. The interaction with DNA stretch occupies residues 185-190; it reads GIGPKS.

It belongs to the Xni family. The cofactor is Mg(2+). It depends on K(+) as a cofactor.

Has flap endonuclease activity. During DNA replication, flap endonucleases cleave the 5'-overhanging flap structure that is generated by displacement synthesis when DNA polymerase encounters the 5'-end of a downstream Okazaki fragment. The protein is Flap endonuclease Xni of Shewanella sp. (strain W3-18-1).